The primary structure comprises 143 residues: Large ribosomal subunit protein uL11 (143 aa).

It belongs to the universal ribosomal protein uL11 family. Part of the ribosomal stalk of the 50S ribosomal subunit. Interacts with L10 and the large rRNA to form the base of the stalk. L10 forms an elongated spine to which L12 dimers bind in a sequential fashion forming a multimeric L10(L12)X complex. Post-translationally, one or more lysine residues are methylated.

Its function is as follows. Forms part of the ribosomal stalk which helps the ribosome interact with GTP-bound translation factors. The sequence is that of Large ribosomal subunit protein uL11 from Bordetella parapertussis (strain 12822 / ATCC BAA-587 / NCTC 13253).